The following is a 195-amino-acid chain: Large ribosomal subunit protein uL18 (195 aa).

It belongs to the universal ribosomal protein uL18 family. Part of the 50S ribosomal subunit. Contacts the 5S and 23S rRNAs.

In terms of biological role, this is one of the proteins that bind and probably mediate the attachment of the 5S RNA into the large ribosomal subunit, where it forms part of the central protuberance. The polypeptide is Large ribosomal subunit protein uL18 (Metallosphaera sedula (strain ATCC 51363 / DSM 5348 / JCM 9185 / NBRC 15509 / TH2)).